Here is a 339-residue protein sequence, read N- to C-terminus: D-erythrose-4-phosphate dehydrogenase (339 aa).

NAD(+) contacts are provided by residues 12–13 (RI) and arginine 81. Residues 154-156 (SCT), arginine 200, 213-214 (TK), and arginine 236 each bind substrate. Catalysis depends on cysteine 155, which acts as the Nucleophile. An NAD(+)-binding site is contributed by asparagine 318.

It belongs to the glyceraldehyde-3-phosphate dehydrogenase family. Epd subfamily. In terms of assembly, homotetramer.

It localises to the cytoplasm. It catalyses the reaction D-erythrose 4-phosphate + NAD(+) + H2O = 4-phospho-D-erythronate + NADH + 2 H(+). It participates in cofactor biosynthesis; pyridoxine 5'-phosphate biosynthesis; pyridoxine 5'-phosphate from D-erythrose 4-phosphate: step 1/5. Catalyzes the NAD-dependent conversion of D-erythrose 4-phosphate to 4-phosphoerythronate. The protein is D-erythrose-4-phosphate dehydrogenase of Escherichia fergusonii (strain ATCC 35469 / DSM 13698 / CCUG 18766 / IAM 14443 / JCM 21226 / LMG 7866 / NBRC 102419 / NCTC 12128 / CDC 0568-73).